The sequence spans 683 residues: Acetyl-coenzyme A synthetase 2 (683 aa).

Residues 206-209 (RGGK) and T325 contribute to the CoA site. Residues 401–403 (GEP) and 425–430 (DTMWQT) each bind ATP. Residue 425–430 (DTMWQT) participates in AMP binding. K506 is covalently cross-linked (Glycyl lysine isopeptide (Lys-Gly) (interchain with G-Cter in ubiquitin)). Residues D516 and R531 each contribute to the ATP site. The AMP site is built by D516 and R531. S539 is a CoA binding site. Position 542 (R542) interacts with ATP. Residue R612 participates in CoA binding. At S679 the chain carries Phosphoserine.

This sequence belongs to the ATP-dependent AMP-binding enzyme family.

It localises to the cytoplasm. The protein resides in the nucleus. It carries out the reaction acetate + ATP + CoA = acetyl-CoA + AMP + diphosphate. The protein operates within carbohydrate metabolism; pyruvate metabolism. In terms of biological role, catalyzes the production of acetyl-CoA. Provides the acetyl-CoA source for histone acetylation in the nucleus. 'Anaerobic' isozyme of acetyl-coenzyme A synthetase, which is required for growth on fermentable carbon sources such as glucose. May be involved in the PDH (pyruvate dehydrogenase complex) bypass. The protein is Acetyl-coenzyme A synthetase 2 of Saccharomyces cerevisiae (strain ATCC 204508 / S288c) (Baker's yeast).